The chain runs to 495 residues: Cobyric acid synthase (495 aa).

The GATase cobBQ-type domain occupies 249 to 443 (EININVIRLP…LHGLFDNGAW (195 aa)). Cys330 acts as the Nucleophile in catalysis. The active site involves His435.

This sequence belongs to the CobB/CobQ family. CobQ subfamily.

It participates in cofactor biosynthesis; adenosylcobalamin biosynthesis. Functionally, catalyzes amidations at positions B, D, E, and G on adenosylcobyrinic A,C-diamide. NH(2) groups are provided by glutamine, and one molecule of ATP is hydrogenolyzed for each amidation. The protein is Cobyric acid synthase of Gloeothece citriformis (strain PCC 7424) (Cyanothece sp. (strain PCC 7424)).